Here is a 115-residue protein sequence, read N- to C-terminus: DNA-directed RNA polymerase subunit omega (115 aa).

This sequence belongs to the RNA polymerase subunit omega family. In terms of assembly, the RNAP catalytic core consists of 2 alpha, 1 beta, 1 beta' and 1 omega subunit. When a sigma factor is associated with the core the holoenzyme is formed, which can initiate transcription.

The catalysed reaction is RNA(n) + a ribonucleoside 5'-triphosphate = RNA(n+1) + diphosphate. Functionally, promotes RNA polymerase assembly. Latches the N- and C-terminal regions of the beta' subunit thereby facilitating its interaction with the beta and alpha subunits. This is DNA-directed RNA polymerase subunit omega from Cutibacterium acnes (strain DSM 16379 / KPA171202) (Propionibacterium acnes).